A 581-amino-acid chain; its full sequence is Protein GAMETOPHYTE DEFECTIVE 1 (581 aa).

The span at 452-467 shows a compositional bias: polar residues; that stretch reads SMNIESTSEGGSMSPS. The segment at 452-512 is disordered; sequence SMNIESTSEG…TTGHASNDEM (61 aa). Basic and acidic residues predominate over residues 496–512; that stretch reads ENSKERATTGHASNDEM.

The protein belongs to the eukaryotic/archaeal RNase P protein component 3 family. As to quaternary structure, probable component of nuclear RNase P and RNase MRP ribonucleoproteins. Interacts with POP5. Mostly expressed in inflorescence and roots, to a lower extent in leaves, and, at low levels, in siliques, seedlings and stems.

The protein resides in the nucleus. It is found in the nucleolus. The protein localises to the mitochondrion. Functionally, probable component of ribonuclease P, a ribonucleoprotein complex that generates mature tRNA molecules by cleaving their 5'-ends. May also be a component of the MRP ribonuclease complex, which cleaves pre-rRNA sequences. Required for female gametophyte development and male competence. This chain is Protein GAMETOPHYTE DEFECTIVE 1, found in Arabidopsis thaliana (Mouse-ear cress).